The sequence spans 533 residues: E3 ubiquitin-protein ligase MGRN1 (533 aa).

The N-myristoyl glycine moiety is linked to residue Gly-2. The RING-type zinc finger occupies 278-317 (ECVVCLSDLRDTLILPCRHLCLCTSCADTLRYQANNCPIC). Positions 385–388 (PSAP) match the Required for TSG101-binding motif. At Tyr-390 the chain carries Phosphotyrosine. The segment at 421–519 (QKGKTQSKSP…QPVPPADIYL (99 aa)) is disordered. The span at 423–439 (GKTQSKSPDSTLRSPSS) shows a compositional bias: polar residues. Residues Ser-429, Ser-450, and Ser-502 each carry the phosphoserine modification. Positions 443 to 454 (EEDEEKLSEDPE) are enriched in acidic residues.

Interacts with MC1R and MC4R. Interacts with TSG101. Interacts with mislocalized cytosolically exposed PRNP; this interaction alters MGRN1 subcellular location and causes lysosomal enlargement. In terms of processing, autoubiquitinated in vitro.

Its subcellular location is the cytoplasm. It is found in the cytosol. The protein localises to the cell membrane. The protein resides in the early endosome. The enzyme catalyses S-ubiquitinyl-[E2 ubiquitin-conjugating enzyme]-L-cysteine + [acceptor protein]-L-lysine = [E2 ubiquitin-conjugating enzyme]-L-cysteine + N(6)-ubiquitinyl-[acceptor protein]-L-lysine.. The protein operates within protein modification; protein ubiquitination. Functionally, E3 ubiquitin-protein ligase. Mediates TSG101 monoubiquitination at multiple sites. Plays a role in the regulation of endosome-to-lysosome trafficking. Impairs MC1R- and MC4R-signaling by competing with GNAS-binding to MCRs and inhibiting agonist-induced cAMP production. Does not inhibit ADRB2-signaling. Does not promote MC1R ubiquitination. Also acts as a negative regulator of hedgehog signaling. In Rattus norvegicus (Rat), this protein is E3 ubiquitin-protein ligase MGRN1 (Mgrn1).